The sequence spans 249 residues: MKSLKKLKELETSDVFNTLHVRTILKVIKIDKCVSLARHSLVNITVGDDGIWFHLEDGTMINGLEYKTICEKELGFQGFIGIIILDSEDTLQELRLNPFQFKRRLIHMKVDTPEEFMLCGLVFALENLPLKQSTLHKLIARLVLFPVLSPVTKILFNTCDKLVCTLRHIFFNEHASEILHKVPPMIRLYNEMKNTHIEVLELYFNTKRSHNFINLSLESRQLQDSSLQVIQLATQFAQIFYSKNEDTSS.

This sequence belongs to the herpesviridae cytoplasmic envelopment protein 1 family.

Its subcellular location is the virion. It localises to the virion tegument. The protein localises to the host cytoplasm. The protein resides in the host Golgi apparatus. Plays a critical role in cytoplasmic virus egress. Participates in the final step of tegumentation and envelope acquisition within the host cytoplasm. The sequence is that of Cytoplasmic envelopment protein 1 (U75) from Homo sapiens (Human).